Reading from the N-terminus, the 239-residue chain is Leucyl/phenylalanyl-tRNA--protein transferase (239 aa).

Belongs to the L/F-transferase family.

It is found in the cytoplasm. The enzyme catalyses N-terminal L-lysyl-[protein] + L-leucyl-tRNA(Leu) = N-terminal L-leucyl-L-lysyl-[protein] + tRNA(Leu) + H(+). The catalysed reaction is N-terminal L-arginyl-[protein] + L-leucyl-tRNA(Leu) = N-terminal L-leucyl-L-arginyl-[protein] + tRNA(Leu) + H(+). It catalyses the reaction L-phenylalanyl-tRNA(Phe) + an N-terminal L-alpha-aminoacyl-[protein] = an N-terminal L-phenylalanyl-L-alpha-aminoacyl-[protein] + tRNA(Phe). Functions in the N-end rule pathway of protein degradation where it conjugates Leu, Phe and, less efficiently, Met from aminoacyl-tRNAs to the N-termini of proteins containing an N-terminal arginine or lysine. This Syntrophus aciditrophicus (strain SB) protein is Leucyl/phenylalanyl-tRNA--protein transferase.